The following is a 525-amino-acid chain: Adenosine deaminase AGSA (525 aa).

Residues 1-25 (MSSFSTHNFVAIATFVCWFCCLATA) form the signal peptide. Asparagine 81 carries N-linked (GlcNAc...) asparagine glycosylation. 2 residues coordinate Zn(2+): histidine 117 and histidine 119. A substrate-binding site is contributed by aspartate 120. Asparagine 132 carries N-linked (GlcNAc...) asparagine glycosylation. A disulfide bridge connects residues cysteine 142 and cysteine 163. N-linked (GlcNAc...) asparagine glycosylation occurs at asparagine 188. Residues 207-214 (WVRFNKYF) and glycine 329 contribute to the substrate site. Asparagine 334 carries an N-linked (GlcNAc...) asparagine glycan. Zn(2+) is bound at residue histidine 361. Glutamate 364 acts as the Proton donor in catalysis. Histidine 389 (proton acceptor) is an active-site residue. A Zn(2+)-binding site is contributed by aspartate 446. Substrate is bound at residue aspartate 447.

Belongs to the metallo-dependent hydrolases superfamily. Adenosine and AMP deaminases family. ADGF subfamily. The cofactor is Zn(2+). Detected in egg cordons and in the developing central nervous system. Not detected in adult central nervous system (at protein level). Atrial gland.

It is found in the secreted. The enzyme catalyses adenosine + H2O + H(+) = inosine + NH4(+). In terms of biological role, adenosine deaminase that may contribute to the degradation of extracellular adenosine, a signaling molecule that controls a variety of cellular responses. May play a role in the regulation of cell proliferation. In Aplysia californica (California sea hare), this protein is Adenosine deaminase AGSA.